Reading from the N-terminus, the 163-residue chain is NADH-quinone oxidoreductase subunit I (163 aa).

2 consecutive 4Fe-4S ferredoxin-type domains span residues 54–84 (LRRYPNGEERCIACKLCEAVCPALAITIESD) and 94–123 (TRYDIDLTKCIFCGFCEEACPVDAVVETPI). [4Fe-4S] cluster is bound by residues Cys64, Cys67, Cys70, Cys74, Cys103, Cys106, Cys109, and Cys113.

This sequence belongs to the complex I 23 kDa subunit family. In terms of assembly, NDH-1 is composed of 14 different subunits. Subunits NuoA, H, J, K, L, M, N constitute the membrane sector of the complex. [4Fe-4S] cluster is required as a cofactor.

The protein resides in the cell inner membrane. It carries out the reaction a quinone + NADH + 5 H(+)(in) = a quinol + NAD(+) + 4 H(+)(out). NDH-1 shuttles electrons from NADH, via FMN and iron-sulfur (Fe-S) centers, to quinones in the respiratory chain. The immediate electron acceptor for the enzyme in this species is believed to be ubiquinone. Couples the redox reaction to proton translocation (for every two electrons transferred, four hydrogen ions are translocated across the cytoplasmic membrane), and thus conserves the redox energy in a proton gradient. In Cupriavidus pinatubonensis (strain JMP 134 / LMG 1197) (Cupriavidus necator (strain JMP 134)), this protein is NADH-quinone oxidoreductase subunit I.